The chain runs to 221 residues: Endonuclease V (221 aa).

Positions 44 and 112 each coordinate Mg(2+).

The protein belongs to the endonuclease V family. Mg(2+) is required as a cofactor.

The protein resides in the cytoplasm. The enzyme catalyses Endonucleolytic cleavage at apurinic or apyrimidinic sites to products with a 5'-phosphate.. Its function is as follows. DNA repair enzyme involved in the repair of deaminated bases. Selectively cleaves double-stranded DNA at the second phosphodiester bond 3' to a deoxyinosine leaving behind the intact lesion on the nicked DNA. The sequence is that of Endonuclease V from Nostoc punctiforme (strain ATCC 29133 / PCC 73102).